Here is a 289-residue protein sequence, read N- to C-terminus: Cyclo(L-tyrosyl-L-tyrosyl) synthase (289 aa).

The tract at residues 1–48 (MSYVAAEPGVLISPTDDLQSPRSAPAAHDENADGITGGTRDDSAPNSR) is disordered. The active-site Nucleophile is the S88. Residues N91, 229–233 (YICAE), and Y253 each bind substrate.

The protein belongs to the CDPS family. In terms of assembly, homodimer.

It catalyses the reaction 2 L-tyrosyl-tRNA(Tyr) = cyclo(L-tyrosyl-L-tyrosyl) + 2 tRNA(Tyr). In terms of biological role, involved in the biosynthesis of mycocyclosin. It uses activated amino acids in the form of aminoacyl-tRNAs (aa-tRNAs) as substrates to catalyze the ATP-independent formation of cyclodipeptides which are intermediates in diketopiperazine (DKP) biosynthetic pathways. Catalyzes the formation of cyclo(L-Tyr-L-Tyr) (cYY) from L-tyrosyl-tRNA(Tyr). The polypeptide is Cyclo(L-tyrosyl-L-tyrosyl) synthase (Mycobacterium tuberculosis (strain CDC 1551 / Oshkosh)).